A 176-amino-acid polypeptide reads, in one-letter code: ATP-dependent protease subunit HslV (176 aa).

Residue T5 is part of the active site. Na(+)-binding residues include A161, C164, and T167.

Belongs to the peptidase T1B family. HslV subfamily. A double ring-shaped homohexamer of HslV is capped on each side by a ring-shaped HslU homohexamer. The assembly of the HslU/HslV complex is dependent on binding of ATP.

It is found in the cytoplasm. The enzyme catalyses ATP-dependent cleavage of peptide bonds with broad specificity.. With respect to regulation, allosterically activated by HslU binding. Protease subunit of a proteasome-like degradation complex believed to be a general protein degrading machinery. The protein is ATP-dependent protease subunit HslV of Desulforamulus reducens (strain ATCC BAA-1160 / DSM 100696 / MI-1) (Desulfotomaculum reducens).